Consider the following 404-residue polypeptide: Bifunctional enzyme IspD/IspF (404 aa).

The tract at residues 1–243 (MQAEEQFSCG…KLTRMAIPDV (243 aa)) is 2-C-methyl-D-erythritol 4-phosphate cytidylyltransferase. The 2-C-methyl-D-erythritol 2,4-cyclodiphosphate synthase stretch occupies residues 244–404 (RTGNGYDVHQ…TVVYASGGDA (161 aa)). A divalent metal cation is bound by residues Asp250 and His252. Residues 250–252 (DVH) and 276–277 (HS) each bind 4-CDP-2-C-methyl-D-erythritol 2-phosphate. Residue His284 coordinates a divalent metal cation. 4-CDP-2-C-methyl-D-erythritol 2-phosphate contacts are provided by residues 298-300 (DIG), 374-377 (TTNE), Phe381, and Arg384.

In the N-terminal section; belongs to the IspD/TarI cytidylyltransferase family. IspD subfamily. This sequence in the C-terminal section; belongs to the IspF family. A divalent metal cation serves as cofactor.

The catalysed reaction is 2-C-methyl-D-erythritol 4-phosphate + CTP + H(+) = 4-CDP-2-C-methyl-D-erythritol + diphosphate. It catalyses the reaction 4-CDP-2-C-methyl-D-erythritol 2-phosphate = 2-C-methyl-D-erythritol 2,4-cyclic diphosphate + CMP. It functions in the pathway isoprenoid biosynthesis; isopentenyl diphosphate biosynthesis via DXP pathway; isopentenyl diphosphate from 1-deoxy-D-xylulose 5-phosphate: step 2/6. It participates in isoprenoid biosynthesis; isopentenyl diphosphate biosynthesis via DXP pathway; isopentenyl diphosphate from 1-deoxy-D-xylulose 5-phosphate: step 4/6. In terms of biological role, bifunctional enzyme that catalyzes the formation of 4-diphosphocytidyl-2-C-methyl-D-erythritol from CTP and 2-C-methyl-D-erythritol 4-phosphate (MEP) (IspD), and catalyzes the conversion of 4-diphosphocytidyl-2-C-methyl-D-erythritol 2-phosphate (CDP-ME2P) to 2-C-methyl-D-erythritol 2,4-cyclodiphosphate (ME-CPP) with a corresponding release of cytidine 5-monophosphate (CMP) (IspF). The chain is Bifunctional enzyme IspD/IspF from Sinorhizobium medicae (strain WSM419) (Ensifer medicae).